Reading from the N-terminus, the 247-residue chain is Adenylate kinase (247 aa).

42–47 contributes to the ATP binding site; that stretch reads GAGKGT. The NMP stretch occupies residues 62–91; it reads ATGDMLRAQVTAKTELGVQAKKIMDQGGLV. AMP is bound by residues Thr63, Arg68, 89 to 91, 118 to 121, and Gln125; these read GLV and GFPR. The segment at 159 to 196 is LID; it reads GRLVHPASGRSYHKLFNPPKKEMTDDQTGEPLVQRSDD. Residues Arg160 and 169–170 contribute to the ATP site; that span reads SY. Residues 169-191 form a disordered region; that stretch reads SYHKLFNPPKKEMTDDQTGEPLV. Arg193 and Arg204 together coordinate AMP. Gln232 is a binding site for ATP.

This sequence belongs to the adenylate kinase family. AK2 subfamily. In terms of assembly, monomer.

It localises to the cytoplasm. Its subcellular location is the cytosol. The protein resides in the mitochondrion intermembrane space. The enzyme catalyses AMP + ATP = 2 ADP. Catalyzes the reversible transfer of the terminal phosphate group between ATP and AMP. Plays an important role in cellular energy homeostasis and in adenine nucleotide metabolism. Adenylate kinase activity is critical for regulation of the phosphate utilization and the AMP de novo biosynthesis pathways. The chain is Adenylate kinase from Meyerozyma guilliermondii (strain ATCC 6260 / CBS 566 / DSM 6381 / JCM 1539 / NBRC 10279 / NRRL Y-324) (Yeast).